Consider the following 484-residue polypeptide: Serine/arginine-rich splicing factor 11 (484 aa).

The disordered stretch occupies residues Met-1 to Glu-33. Ser-2 is modified (N-acetylserine). Over residues Gly-14–Thr-32 the composition is skewed to gly residues. Residues Glu-33 to Gly-113 enclose the RRM domain. Lys-197 is covalently cross-linked (Glycyl lysine isopeptide (Lys-Gly) (interchain with G-Cter in SUMO2)). Phosphoserine is present on Ser-207. Residue Lys-211 forms a Glycyl lysine isopeptide (Lys-Gly) (interchain with G-Cter in SUMO2) linkage. Residue Ser-212 is modified to Phosphoserine. The interval Ile-233–Asp-484 is disordered. The segment covering Glu-244–Ser-308 has biased composition (basic residues). A run of 10 repeats spans residues Arg-247–Ser-255, Arg-258–Arg-265, Arg-267–Arg-274, Arg-275–Arg-282, Arg-285–Arg-292, Arg-293–Arg-300, Arg-302–Lys-309, Lys-321–Lys-328, Arg-334–Arg-341, and Arg-346–Arg-353. The interval Arg-247–Arg-353 is 10 X 8 AA approximate repeats of R-R-S-R-S-R-S-R. Positions Lys-309 to Lys-320 are enriched in basic and acidic residues. Residue Ser-323 is modified to Phosphoserine. Thr-325 is modified (phosphothreonine). The span at Arg-334–Lys-379 shows a compositional bias: basic residues. 3 stretches are compositionally biased toward basic and acidic residues: residues Lys-380–Thr-395, Lys-402–Asp-424, and Asp-433–Glu-478. 2 positions are modified to phosphoserine: Ser-414 and Ser-434. Thr-447 carries the post-translational modification Phosphothreonine. Residues Ser-449, Ser-456, Ser-464, and Ser-483 each carry the phosphoserine modification.

This sequence belongs to the splicing factor SR family. In terms of assembly, interacts with PUF60.

Its subcellular location is the nucleus. May function in pre-mRNA splicing. The protein is Serine/arginine-rich splicing factor 11 (SRSF11) of Homo sapiens (Human).